Here is a 595-residue protein sequence, read N- to C-terminus: Aspartate--tRNA(Asp/Asn) ligase (595 aa).

L-aspartate is bound at residue E175. Positions 199 to 202 (QQYK) are aspartate. Residues R221 and H454 each coordinate L-aspartate. An ATP-binding site is contributed by 221-223 (RDE). E488 serves as a coordination point for ATP. R495 is a binding site for L-aspartate. 540–543 (GIDR) contributes to the ATP binding site.

It belongs to the class-II aminoacyl-tRNA synthetase family. Type 1 subfamily. As to quaternary structure, homodimer.

It localises to the cytoplasm. The catalysed reaction is tRNA(Asx) + L-aspartate + ATP = L-aspartyl-tRNA(Asx) + AMP + diphosphate. Functionally, aspartyl-tRNA synthetase with relaxed tRNA specificity since it is able to aspartylate not only its cognate tRNA(Asp) but also tRNA(Asn). Reaction proceeds in two steps: L-aspartate is first activated by ATP to form Asp-AMP and then transferred to the acceptor end of tRNA(Asp/Asn). This is Aspartate--tRNA(Asp/Asn) ligase from Brucella canis (strain ATCC 23365 / NCTC 10854 / RM-666).